The primary structure comprises 218 residues: Riboflavin synthase (218 aa).

Lumazine-binding repeat units follow at residues 1 to 97 (MFTG…LGGH) and 98 to 194 (LVSG…EKLI). 2,4-dihydroxypteridine-binding positions include 4-6 (GII), 48-50 (CLT), 62-67 (DLSLET), 101-103 (GHV), Lys136, 145-147 (SLT), and 159-164 (TIVPHT).

As to quaternary structure, homotrimer.

It catalyses the reaction 2 6,7-dimethyl-8-(1-D-ribityl)lumazine + H(+) = 5-amino-6-(D-ribitylamino)uracil + riboflavin. The protein operates within cofactor biosynthesis; riboflavin biosynthesis; riboflavin from 2-hydroxy-3-oxobutyl phosphate and 5-amino-6-(D-ribitylamino)uracil: step 2/2. Its function is as follows. Catalyzes the dismutation of two molecules of 6,7-dimethyl-8-ribityllumazine, resulting in the formation of riboflavin and 5-amino-6-(D-ribitylamino)uracil. This chain is Riboflavin synthase (ribE), found in Photobacterium leiognathi.